The sequence spans 1807 residues: Atrochrysone carboxylic acid synthase Agnpks1 (1807 aa).

The N-terminal acylcarrier protein transacylase domain (SAT) stretch occupies residues 41-173; the sequence is LFRELHNHSK…ITGAQVIRQA (133 aa). The 435-residue stretch at 411 to 845 folds into the Ketosynthase family 3 (KS3) domain; sequence QSKIAIVGMS…GGNTTILLEE (435 aa). Residues Cys584, His720, and His763 each act as for beta-ketoacyl synthase activity in the active site. Positions 946-1265 are malonyl-CoA:ACP transacylase (MAT) domain; the sequence is FTFTGQGASY…SLAALHCAGV (320 aa). The product template (PT) domain stretch occupies residues 1334 to 1653; the sequence is TSTVHQIIQE…RILLSRFFSA (320 aa). The tract at residues 1338–1473 is N-terminal hotdog fold; that stretch reads HQIIQESIDG…ATLIYGDPSE (136 aa). Residues 1338-1648 enclose the PKS/mFAS DH domain; it reads HQIIQESIDG…FRRYPRILLS (311 aa). Catalysis depends on His1370, which acts as the Proton acceptor; for dehydratase activity. Residues 1500 to 1648 form a C-terminal hotdog fold region; sequence VANRFNHQMA…FRRYPRILLS (149 aa). Asp1559 (proton donor; for dehydratase activity) is an active-site residue. A Carrier domain is found at 1732 to 1806; the sequence is DTTTAKAIQI…DLRSWLEEYY (75 aa). Ser1766 carries the post-translational modification O-(pantetheine 4'-phosphoryl)serine.

It carries out the reaction holo-[ACP] + 8 malonyl-CoA + 8 H(+) = atrochrysone carboxyl-[ACP] + 8 CO2 + 8 CoA + 2 H2O. The protein operates within secondary metabolite biosynthesis. In terms of biological role, non-reducing polyketide synthase; part of the gene cluster that mediates the biosynthesis of agnestins, dihydroxy-xanthone metabolites. The pathway begins with the assembly and cyclization of atrochrysone thioester by the non-reducing polyketide synthase Agnpks1. The atrochrysone carboxyl ACP thioesterase AgnL7 then breaks the thioester bond and releases the atrochrysone carboxylic acid as the first enzyme-free intermediate. The decarboxylase AgnL1 then catalyzes the concerted decarboxylation-elimination required to convert atochrysone carboxylic acid into emodin anthrone, which is further oxidized to emodin by the anthrone oxygenase AgnL2. Emodin then undergoes reduction catalyzed by the oxidoreductase AgnL4 to yield the dihydroquinone tautomer which is the substrate for reduction by the short chain dehydrogenase AgnL6 reduction to produce hydroxyketone, followed by AgnL8 dehydration and likely spontaneous autoxidation to chrysophanol. Baeyer-Villiger oxidation by the oxidase AgnL3 leads to monodictyphenone via cleavage of the C-10/C-10a bond of chrysophanol. Alternative cleavage at the C-4a/C-10 bond of chrysophanol also leads to the formation some cephalone F. Further conversion to agnestins A and B, requires reduction to dihydro-monodictyphenone, oxidation to agnestin C probably via an epoxide, and rearrangement to either agnestin A or agnestin B directly, although agnestin A or agnestin B can also interconvert. Within the cluster, AgnR1 is the only unassigned oxidoreductase present which could be involved in this conversion. However, AgnR1 seems not to be involved in this step, and thus genes involved in the proposed oxidation/reduction may be located elsewhere on the genome. Further agnestin A derivatives are probably formed by spontaneous decarboxylations, dehydrations and methanolysis reactions. The chain is Atrochrysone carboxylic acid synthase Agnpks1 from Paecilomyces divaricatus (Penicillium divaricatum).